The primary structure comprises 215 residues: Cytochrome c biogenesis ATP-binding export protein CcmA (215 aa).

Residues 3-215 enclose the ABC transporter domain; sequence LEAENLAGER…MAAFSVEDIA (213 aa). 35–42 contributes to the ATP binding site; it reads GPNGSGKS.

This sequence belongs to the ABC transporter superfamily. CcmA exporter (TC 3.A.1.107) family. In terms of assembly, the complex is composed of two ATP-binding proteins (CcmA) and two transmembrane proteins (CcmB).

It is found in the cell inner membrane. The catalysed reaction is heme b(in) + ATP + H2O = heme b(out) + ADP + phosphate + H(+). Functionally, part of the ABC transporter complex CcmAB involved in the biogenesis of c-type cytochromes; once thought to export heme, this seems not to be the case, but its exact role is uncertain. Responsible for energy coupling to the transport system. This Brucella abortus (strain 2308) protein is Cytochrome c biogenesis ATP-binding export protein CcmA.